The primary structure comprises 182 residues: Ribosome-recycling factor (182 aa).

It belongs to the RRF family.

The protein resides in the cytoplasm. In terms of biological role, responsible for the release of ribosomes from messenger RNA at the termination of protein biosynthesis. May increase the efficiency of translation by recycling ribosomes from one round of translation to another. This Nostoc punctiforme (strain ATCC 29133 / PCC 73102) protein is Ribosome-recycling factor.